We begin with the raw amino-acid sequence, 374 residues long: Peroxisome biogenesis factor 10 (374 aa).

2 stretches are compositionally biased toward polar residues: residues 1 to 11 (MSNVQSQSNSH) and 18 to 31 (VNRS…QQIR). At 1 to 82 (MSNVQSQSNS…NSNLYPSYAD (82 aa)) the chain is on the peroxisomal matrix side. Residues 1–82 (MSNVQSQSNS…NSNLYPSYAD (82 aa)) are disordered. A compositionally biased stretch (low complexity) spans 35-76 (PTNNNNNNNNNSINNINNNTQRQPLNNNNNNNNNINRNNSNL). A helical membrane pass occupies residues 83-112 (QPDILRSSQKDEYYKKLFEDQCFEMLTRIT). A topological domain (cytoplasmic) is located at residue Gly113. The chain crosses the membrane as a helical span at residues 114-135 (PRFIMNRQSESKLLANTIYYLL). Residues 136 to 165 (TTMIGSQTLGEEYCNLRKIKDKTFSIPSIP) are Peroxisomal matrix-facing. A helical transmembrane segment spans residues 166 to 181 (DRIKLYFFHLLAPYLI). Over 182-192 (KKSLPKLFQRH) the chain is Cytoplasmic. The chain crosses the membrane as a helical span at residues 193–216 (PKLYILKEIFPKFERLHLALFYFN). The Peroxisomal matrix segment spans residues 217–243 (GSYFEFSKRLSDIRYIFNRKIDQKRPK). The helical transmembrane segment at 244 to 263 (YDILGLLIIIQILLSTFMYL) threads the bilayer. The Cytoplasmic segment spans residues 264-374 (KENSFFLKQQ…IRTCVPLYNY (111 aa)). The Zn(2+) site is built by Cys322, Cys325, Cys337, His339, Cys342, Cys345, Cys356, and Cys359. The segment at 322 to 360 (CTLCLEVRTHTTATICGHLFCWHCITEWCNNKEQCPVCR) adopts an RING-type zinc-finger fold.

This sequence belongs to the pex2/pex10/pex12 family. As to quaternary structure, component of the PEX2-PEX10-PEX12 retrotranslocation channel.

Its subcellular location is the peroxisome membrane. The enzyme catalyses S-ubiquitinyl-[E2 ubiquitin-conjugating enzyme]-L-cysteine + [acceptor protein]-L-lysine = [E2 ubiquitin-conjugating enzyme]-L-cysteine + N(6)-ubiquitinyl-[acceptor protein]-L-lysine.. It participates in protein modification; protein ubiquitination. Its activity is regulated as follows. The E3 ubiquitin-protein ligase activity is stimulated by PEX12. Functionally, E3 ubiquitin-protein ligase component of a retrotranslocation channel required for peroxisome organization by mediating export of the PEX5 receptor from peroxisomes to the cytosol, thereby promoting PEX5 recycling. The retrotranslocation channel is composed of PEX2, PEX10 and PEX12; each subunit contributing transmembrane segments that coassemble into an open channel that specifically allows the passage of PEX5 through the peroxisomal membrane. PEX10 also regulates PEX5 recycling by acting as a E3 ubiquitin-protein ligase. When PEX5 recycling is compromised, PEX10 catalyzes polyubiquitination of PEX5 during its passage through the retrotranslocation channel, leading to its degradation. The protein is Peroxisome biogenesis factor 10 (pex10) of Dictyostelium discoideum (Social amoeba).